The following is a 546-amino-acid chain: Cytochrome P450 monooxygenase gloP (546 aa).

The helical transmembrane segment at 17–37 (TLSGGILTFLFIVVIAHFVLT) threads the bilayer. N189, N413, and N416 each carry an N-linked (GlcNAc...) asparagine glycan. C492 contributes to the heme binding site.

It belongs to the cytochrome P450 family. Heme is required as a cofactor.

The protein localises to the membrane. The protein operates within mycotoxin biosynthesis. In terms of biological role, cytochrome P450 monooxygenase; part of the gene cluster that mediates the biosynthesis of pneumocandins, lipohexapeptides of the echinocandin family that prevent fungal cell wall formation by non-competitive inhibition of beta-1,3-glucan synthase. The 10,12-dimethylmyristoyl side chain is synthesized by the reducing polyketide synthase gloL/GLPKS4. The thioesterase gloN/GLHYD exclusively interacts with gloL/GLPKS4 to maintain turnover of the polyketide side chain. The 10R,12S-dimethylmyristic acid is then transferred to the first thiolation domain of the nonribosomal peptide synthetase gloA/GLNRPS4 by the acyl-AMP ligase gloD/GLligase, followed by its acylation to L-ornithine to trigger elongation of the cyclic hexapeptide. L-ornithine, 4R-hydroxyl-L-proline (generated from L-proline by the dioxygenase gloF/GLOXY2), 3S-hydroxyl-L-homotyrosine (generated by gloG/GLHtyB, gloH/GLHtyA, gloI/GLHtyC, gloJ/GLHtyD and hydroxylated at C-3 by the dioxygenase gloM/GLOXY1), 3R-hydroxyl-L-glutamine (generated from L-glutamine probably by the dioxygenase gloE/GLOXY3) and 3S-hydroxyl-L-proline (generated from L-proline by the dioxygenase gloF/GLOXY2 to yield pneumocandin B0), or 3S-hydroxyl-4S-methyl-L-proline (generated from L-leucine by the dioxygenase gloC/GLOXY4 to yield pneumocandin A0) are sequentially added to the growing chain. The last C domain of gloA/GLNRPS4 is proposed to be responsible for cyclization by condensation to form the peptide bond between L-ornithine and 3S-hydroxyl-4S-methyl-L-proline (for pneumocandin A0) or 3S-hydroxyl-L-proline (for pneumocandin B0). Finally, the subsequent C-4 hydroxylation of 3S-hydroxyl-L-homotyrosine and L-ornithine dihydroxylation at C-4 and C-5 are performed by the cytochrome P450 monooxygenases gloP/GLP450-1 and gloO/GLP450-2, respectively. This is Cytochrome P450 monooxygenase gloP from Glarea lozoyensis (strain ATCC 20868 / MF5171).